Consider the following 28-residue polypeptide: Ranatuerin-2AVb (28 aa).

A disulfide bridge links Cys-23 with Cys-28.

As to expression, expressed by the skin glands.

Its subcellular location is the secreted. Has antibacterial activity. In Rana arvalis (Moor frog), this protein is Ranatuerin-2AVb.